Reading from the N-terminus, the 256-residue chain is Protein FixA (256 aa).

It belongs to the ETF beta-subunit/FixA family. As to quaternary structure, heterodimer of FixA and FixB.

The protein operates within amine and polyamine metabolism; carnitine metabolism. Functionally, required for anaerobic carnitine reduction. May bring reductant to CaiA. This Escherichia coli O6:H1 (strain CFT073 / ATCC 700928 / UPEC) protein is Protein FixA.